The primary structure comprises 284 residues: tRNA pseudouridine synthase A (284 aa).

Residue D62 is the Nucleophile of the active site. Substrate is bound at residue Y120.

The protein belongs to the tRNA pseudouridine synthase TruA family. As to quaternary structure, homodimer.

It carries out the reaction uridine(38/39/40) in tRNA = pseudouridine(38/39/40) in tRNA. In terms of biological role, formation of pseudouridine at positions 38, 39 and 40 in the anticodon stem and loop of transfer RNAs. The protein is tRNA pseudouridine synthase A of Thermosynechococcus vestitus (strain NIES-2133 / IAM M-273 / BP-1).